The following is a 361-amino-acid chain: 1D-myo-inositol 2-acetamido-2-deoxy-alpha-D-glucopyranoside deacetylase (361 aa).

The span at 1-12 (MTTTPQPPPQPD) shows a compositional bias: pro residues. The disordered stretch occupies residues 1–27 (MTTTPQPPPQPDETPEGAAGAATAGRD). The segment covering 16 to 25 (EGAAGAATAG) has biased composition (low complexity). Zn(2+) is bound by residues His-66, Asp-69, and His-207.

The protein belongs to the MshB deacetylase family. The cofactor is Zn(2+).

It catalyses the reaction 1D-myo-inositol 2-acetamido-2-deoxy-alpha-D-glucopyranoside + H2O = 1D-myo-inositol 2-amino-2-deoxy-alpha-D-glucopyranoside + acetate. Functionally, catalyzes the deacetylation of 1D-myo-inositol 2-acetamido-2-deoxy-alpha-D-glucopyranoside (GlcNAc-Ins) in the mycothiol biosynthesis pathway. The polypeptide is 1D-myo-inositol 2-acetamido-2-deoxy-alpha-D-glucopyranoside deacetylase (Kineococcus radiotolerans (strain ATCC BAA-149 / DSM 14245 / SRS30216)).